Consider the following 504-residue polypeptide: Amphoterin-induced protein 3 (504 aa).

The N-terminal stretch at 1 to 19 (MTWLVLLGTLLCMLRVGLG) is a signal peptide. Residues 20-383 (TPDSEGFPPR…PRPEPEAFNT (364 aa)) are Extracellular-facing. The region spanning 25-61 (GFPPRALHNCPYKCICAADLLSCTGLGLQDVPAELPA) is the LRRNT domain. 2 cysteine pairs are disulfide-bonded: Cys-34-Cys-40 and Cys-38-Cys-47. 6 LRR repeats span residues 62–83 (ATAD…WLAP), 86–107 (QLRA…VFVN), 110–133 (GLRL…DGLG), 134–155 (ALEK…AFHG), 158–178 (ALSH…DHLH), and 184–207 (HLLT…AALP). N-linked (GlcNAc...) asparagine glycosylation is present at Asn-107. The region spanning 219–275 (NPLPCDCRLYHLLQRWHQRGLSAVRDFAREYVCLAFKVPASRVRFFQHSRVFENCSS) is the LRRCT domain. Intrachain disulfides connect Cys-223–Cys-251, Cys-225–Cys-273, and Cys-300–Cys-352. 4 N-linked (GlcNAc...) asparagine glycosylation sites follow: Asn-272, Asn-301, Asn-362, and Asn-368. Residues 277-370 (PALGLERPEE…HNQTHEYNVS (94 aa)) form the Ig-like C2-type domain. A helical transmembrane segment spans residues 384 to 404 (GFTTLLGCAVGLVLVLLYLFA). Residues 405-504 (PPCRCCRRAC…SIGSEGPMTT (100 aa)) are Cytoplasmic-facing. The segment at 422–448 (TPSPLQELSAQSSVLSTTPPDAPSRKA) is disordered. The span at 424–440 (SPLQELSAQSSVLSTTP) shows a compositional bias: polar residues.

This sequence belongs to the immunoglobulin superfamily. AMIGO family. Binds AMIGO1 or AMIGO2.

It is found in the membrane. May mediate heterophilic cell-cell interaction. May contribute to signal transduction through its intracellular domain. This chain is Amphoterin-induced protein 3, found in Homo sapiens (Human).